We begin with the raw amino-acid sequence, 202 residues long: Alcohol dehydrogenase-related 31 kDa protein (202 aa).

11-34 (YVADCGGIALETSKVLMTKNIAKL) lines the NAD(+) pocket. Ser139 serves as a coordination point for substrate. Tyr152 acts as the Proton acceptor in catalysis.

Belongs to the short-chain dehydrogenases/reductases (SDR) family.

This is Alcohol dehydrogenase-related 31 kDa protein (Adhr) from Drosophila erecta (Fruit fly).